Consider the following 138-residue polypeptide: Nucleoside diphosphate kinase (138 aa).

Residues K11, F59, R87, T93, R104, and N114 each contribute to the ATP site. H117 acts as the Pros-phosphohistidine intermediate in catalysis.

This sequence belongs to the NDK family. It depends on Mg(2+) as a cofactor.

It localises to the cytoplasm. The catalysed reaction is a 2'-deoxyribonucleoside 5'-diphosphate + ATP = a 2'-deoxyribonucleoside 5'-triphosphate + ADP. The enzyme catalyses a ribonucleoside 5'-diphosphate + ATP = a ribonucleoside 5'-triphosphate + ADP. Functionally, major role in the synthesis of nucleoside triphosphates other than ATP. The ATP gamma phosphate is transferred to the NDP beta phosphate via a ping-pong mechanism, using a phosphorylated active-site intermediate. This is Nucleoside diphosphate kinase from Saccharolobus islandicus (strain Y.N.15.51 / Yellowstone #2) (Sulfolobus islandicus).